The sequence spans 630 residues: Arginine--tRNA ligase (630 aa).

A 'HIGH' region motif is present at residues 120-130; that stretch reads ANPIHPLHIGH.

This sequence belongs to the class-I aminoacyl-tRNA synthetase family.

It localises to the cytoplasm. It carries out the reaction tRNA(Arg) + L-arginine + ATP = L-arginyl-tRNA(Arg) + AMP + diphosphate. This Pyrobaculum arsenaticum (strain DSM 13514 / JCM 11321 / PZ6) protein is Arginine--tRNA ligase.